A 674-amino-acid chain; its full sequence is tRNA wybutosine-synthesizing protein 4 (674 aa).

Residues R84, G109, D140, 184–185 (DL), and E212 each bind S-adenosyl-L-methionine.

It belongs to the methyltransferase superfamily. LCMT family.

The catalysed reaction is 7-[(3S)-3-amino-3-carboxypropyl]wyosine(37) in tRNA(Phe) + S-adenosyl-L-methionine = 7-[(3S)-(3-amino-3-methoxycarbonyl)propyl]wyosine(37) in tRNA(Phe) + S-adenosyl-L-homocysteine. It catalyses the reaction 7-[(3S)-(3-amino-3-methoxycarbonyl)propyl]wyosine(37) in tRNA(Phe) + S-adenosyl-L-methionine + CO2 = wybutosine(37) in tRNA(Phe) + S-adenosyl-L-homocysteine + 2 H(+). The protein operates within tRNA modification; wybutosine-tRNA(Phe) biosynthesis. Probable S-adenosyl-L-methionine-dependent methyltransferase that acts as a component of the wybutosine biosynthesis pathway. Wybutosine is a hyper modified guanosine with a tricyclic base found at the 3'-position adjacent to the anticodon of eukaryotic phenylalanine tRNA. May methylate the carboxyl group of leucine residues to form alpha-leucine ester residues. The polypeptide is tRNA wybutosine-synthesizing protein 4 (PPM2) (Candida glabrata (strain ATCC 2001 / BCRC 20586 / JCM 3761 / NBRC 0622 / NRRL Y-65 / CBS 138) (Yeast)).